We begin with the raw amino-acid sequence, 100 residues long: Small ribosomal subunit protein uS14c (100 aa).

This sequence belongs to the universal ribosomal protein uS14 family. Part of the 30S ribosomal subunit.

Its subcellular location is the plastid. The protein resides in the chloroplast. In terms of biological role, binds 16S rRNA, required for the assembly of 30S particles. The polypeptide is Small ribosomal subunit protein uS14c (Cyanidium caldarium (Red alga)).